A 1166-amino-acid chain; its full sequence is ATP-dependent helicase/deoxyribonuclease subunit B (1166 aa).

Residues 1 to 290 (MGMRFILGRS…DTLEGNFQNR (290 aa)) enclose the UvrD-like helicase ATP-binding domain. 8–15 (GRSGTNKS) is a binding site for ATP. The UvrD-like helicase C-terminal domain maps to 283 to 588 (LEGNFQNRPY…QFSHVPPSMD (306 aa)). [4Fe-4S] cluster contacts are provided by cysteine 802, cysteine 1123, cysteine 1126, and cysteine 1132.

It belongs to the helicase family. AddB/RexB type 1 subfamily. In terms of assembly, heterodimer of AddA and AddB. Mg(2+) is required as a cofactor. Requires [4Fe-4S] cluster as cofactor.

In terms of biological role, the heterodimer acts as both an ATP-dependent DNA helicase and an ATP-dependent, dual-direction single-stranded exonuclease. Recognizes the chi site generating a DNA molecule suitable for the initiation of homologous recombination. The AddB subunit has 5' -&gt; 3' nuclease activity but not helicase activity. The chain is ATP-dependent helicase/deoxyribonuclease subunit B from Oceanobacillus iheyensis (strain DSM 14371 / CIP 107618 / JCM 11309 / KCTC 3954 / HTE831).